The sequence spans 72 residues: Translation initiation factor IF-1 (72 aa).

The 72-residue stretch at 1–72 (MAKEDVIEMQ…SKGRIVFRAR (72 aa)) folds into the S1-like domain.

Belongs to the IF-1 family. In terms of assembly, component of the 30S ribosomal translation pre-initiation complex which assembles on the 30S ribosome in the order IF-2 and IF-3, IF-1 and N-formylmethionyl-tRNA(fMet); mRNA recruitment can occur at any time during PIC assembly.

The protein localises to the cytoplasm. Functionally, one of the essential components for the initiation of protein synthesis. Stabilizes the binding of IF-2 and IF-3 on the 30S subunit to which N-formylmethionyl-tRNA(fMet) subsequently binds. Helps modulate mRNA selection, yielding the 30S pre-initiation complex (PIC). Upon addition of the 50S ribosomal subunit IF-1, IF-2 and IF-3 are released leaving the mature 70S translation initiation complex. This Photobacterium profundum (strain SS9) protein is Translation initiation factor IF-1.